Consider the following 170-residue polypeptide: Myosin regulatory light chain 2 (170 aa).

Basic residues predominate over residues 1-13; sequence MSKAAKKKSSKKR. The disordered stretch occupies residues 1-22; it reads MSKAAKKKSSKKRSGSEAAQFD. 2 consecutive EF-hand domains span residues 24 to 59 and 93 to 128; these read KTIQ…MGQI and DPEA…KRGE. Ca(2+) is bound by residues Asp-37, Asn-39, Asp-41, and Asp-48.

In terms of assembly, myosin is a hexamer of 2 heavy chains and 4 light chains (two regulatory light chains and two essential light chains).

The chain is Myosin regulatory light chain 2 (mlc-2) from Caenorhabditis elegans.